Consider the following 500-residue polypeptide: Pyridine nucleotide-disulfide oxidoreductase domain-containing protein 1 (500 aa).

Position 1 is an N-acetylmethionine (methionine 1). The segment at 211–235 is disordered; the sequence is TRYTTEGRKKEARSKSKADNVGSAL. Residues 213–228 are compositionally biased toward basic and acidic residues; sequence YTTEGRKKEARSKSKA.

This sequence belongs to the class-I pyridine nucleotide-disulfide oxidoreductase family. PYROXD1 subfamily. Requires FAD as cofactor.

It is found in the nucleus. It localises to the cytoplasm. The protein resides in the myofibril. The protein localises to the sarcomere. Its function is as follows. Probable FAD-dependent oxidoreductase; involved in the cellular oxidative stress response. Required for normal sarcomere structure and muscle fiber integrity. The chain is Pyridine nucleotide-disulfide oxidoreductase domain-containing protein 1 (PYROXD1) from Homo sapiens (Human).